A 572-amino-acid polypeptide reads, in one-letter code: Glutamate--tRNA ligase (572 aa).

The 'HIGH' region motif lies at 112–122 (PNPNGPPSLGN).

This sequence belongs to the class-I aminoacyl-tRNA synthetase family. Glutamate--tRNA ligase type 2 subfamily.

The protein localises to the cytoplasm. It catalyses the reaction tRNA(Glu) + L-glutamate + ATP = L-glutamyl-tRNA(Glu) + AMP + diphosphate. Functionally, catalyzes the attachment of glutamate to tRNA(Glu) in a two-step reaction: glutamate is first activated by ATP to form Glu-AMP and then transferred to the acceptor end of tRNA(Glu). This is Glutamate--tRNA ligase from Methanocella arvoryzae (strain DSM 22066 / NBRC 105507 / MRE50).